Reading from the N-terminus, the 575-residue chain is Alpha-(1,6)-fucosyltransferase (575 aa).

The Cytoplasmic segment spans residues 1 to 9; sequence MRPWTGSWR. A helical; Signal-anchor for type II membrane protein membrane pass occupies residues 10 to 30; it reads WIMLILFAWGTLLFYIGGHLV. The Lumenal segment spans residues 31-575; the sequence is RDNDHPDHSS…KVPHVPEAEK (545 aa). Intrachain disulfides connect cysteine 204–cysteine 266, cysteine 212–cysteine 230, and cysteine 218–cysteine 222. Positions 206–493 constitute a GT23 domain; it reads KAKKLVCNIN…PDASANFHSL (288 aa). At serine 278 the chain carries Phosphoserine. Residues 299 to 305 carry the SH3-binding motif; sequence PRPPYLP. The interval 365–366 is important for donor substrate binding; the sequence is RR. Cysteine 465 and cysteine 472 are disulfide-bonded. One can recognise an SH3 domain in the interval 502-563; it reads QNAHNQIAIY…PSYKVREKIE (62 aa).

It belongs to the glycosyltransferase 23 family. Tyrosine phosphorylated by PKDCC/VLK. As to expression, highest expression found in brain. Also found in heart, lung, spleen and kidney.

The protein resides in the golgi apparatus. Its subcellular location is the golgi stack membrane. The catalysed reaction is N(4)-{beta-D-GlcNAc-(1-&gt;2)-alpha-D-Man-(1-&gt;3)-[beta-D-GlcNAc-(1-&gt;2)-alpha-D-Man-(1-&gt;6)]-beta-D-Man-(1-&gt;4)-beta-D-GlcNAc-(1-&gt;4)-beta-D-GlcNAc}-L-asparaginyl-[protein] + GDP-beta-L-fucose = an N(4)-{beta-D-GlcNAc-(1-&gt;2)-alpha-D-Man-(1-&gt;3)-[beta-D-GlcNAc-(1-&gt;2)-alpha-D-Man-(1-&gt;6)]-beta-D-Man-(1-&gt;4)-beta-D-GlcNAc-(1-&gt;4)-[alpha-L-Fuc-(1-&gt;6)]-beta-D-GlcNAc}-L-asparaginyl-[protein] + GDP + H(+). It participates in protein modification; protein glycosylation. Functionally, catalyzes the addition of fucose in alpha 1-6 linkage to the first GlcNAc residue, next to the peptide chains in N-glycans. This is Alpha-(1,6)-fucosyltransferase (FUT8) from Bos taurus (Bovine).